The following is a 283-amino-acid chain: 4-diphosphocytidyl-2-C-methyl-D-erythritol kinase (283 aa).

Lys10 is a catalytic residue. Pro99–Ser109 is a binding site for ATP. Residue Asp141 is part of the active site.

Belongs to the GHMP kinase family. IspE subfamily. Homodimer.

It carries out the reaction 4-CDP-2-C-methyl-D-erythritol + ATP = 4-CDP-2-C-methyl-D-erythritol 2-phosphate + ADP + H(+). It functions in the pathway isoprenoid biosynthesis; isopentenyl diphosphate biosynthesis via DXP pathway; isopentenyl diphosphate from 1-deoxy-D-xylulose 5-phosphate: step 3/6. Its function is as follows. Catalyzes the phosphorylation of the position 2 hydroxy group of 4-diphosphocytidyl-2C-methyl-D-erythritol. The chain is 4-diphosphocytidyl-2-C-methyl-D-erythritol kinase from Escherichia coli O7:K1 (strain IAI39 / ExPEC).